The following is a 439-amino-acid chain: MATVLIVGKPNVGKSTLFNKLVRKRKAIVEDEEGVTRDPVQDTVEWYGKTFRLVDTCGVFDNPQDVISKKMKEVTLNMIREADLVLFVVDGKNGITKEDESLADFLRKSGVDVILVANKTENQRRFEREIKPELYRLGFGDPIPVSAEHSINLDTLMEKIIQKLEEKGLDLETKPEITEAIKIAIVGRPNVGKSTLFNAILNKERALVSPIPGTTRDPVDDEVFIDGKKYIFVDTAGLRRKSRIEPKTVERYSTYRVVESIERADVAVIVLDATQGITRQDQRIAGLVERKGKASVVVFNKWDLVEHREKRYDEFTKLFREKLYFVDYSPLIFTSADKGWGVEKIIDAINLAYSSYTTKVPSSALNSALQKVLAFTNLPRGLKIFFGLQVDIKPPTFLFFVNNTEKIKEPQKVFLRRLIREYVFPFEGSPIFLKFKKSR.

EngA-type G domains lie at 2-168 (ATVL…EEKG) and 181-357 (IKIA…SSYT). Residues 8-15 (GKPNVGKS), 55-59 (DTCGV), 118-121 (NKTE), 187-194 (GRPNVGKS), 234-238 (DTAGL), and 300-303 (NKWD) contribute to the GTP site. Residues 358-439 (TKVPSSALNS…PIFLKFKKSR (82 aa)) form the KH-like domain.

Belongs to the TRAFAC class TrmE-Era-EngA-EngB-Septin-like GTPase superfamily. EngA (Der) GTPase family. Associates with the 50S ribosomal subunit.

GTPase that plays an essential role in the late steps of ribosome biogenesis. This is GTPase Der from Thermotoga neapolitana (strain ATCC 49049 / DSM 4359 / NBRC 107923 / NS-E).